Reading from the N-terminus, the 377-residue chain is 4-hydroxy-tetrahydrodipicolinate synthase 2, chloroplastic (377 aa).

The transit peptide at 1–51 (MMAAQPTANPGVRLGWKAPGALASPPRLALSRSAAAPLASHRVGRGKFSAA) directs the protein to the chloroplast. Threonine 120 is a binding site for pyruvate. The Proton donor/acceptor role is filled by tyrosine 206. Lysine 234 (schiff-base intermediate with substrate) is an active-site residue. Pyruvate is bound at residue isoleucine 273.

This sequence belongs to the DapA family. In terms of assembly, tetramer of modified subunits derived from two genes in different combinations.

The protein resides in the plastid. The protein localises to the chloroplast. It carries out the reaction L-aspartate 4-semialdehyde + pyruvate = (2S,4S)-4-hydroxy-2,3,4,5-tetrahydrodipicolinate + H2O + H(+). It functions in the pathway amino-acid biosynthesis; L-lysine biosynthesis via DAP pathway; (S)-tetrahydrodipicolinate from L-aspartate: step 3/4. Sensitive to lysine inhibition. This inhibition increase in an allosteric manner with increasing concentration of the inhibitor. Catalyzes the condensation of (S)-aspartate-beta-semialdehyde [(S)-ASA] and pyruvate to 4-hydroxy-tetrahydrodipicolinate (HTPA). The protein is 4-hydroxy-tetrahydrodipicolinate synthase 2, chloroplastic of Triticum aestivum (Wheat).